Consider the following 446-residue polypeptide: Glucarate dehydratase-related protein (446 aa).

Residues H31, T104, Y149, and K204 each coordinate substrate. The Proton acceptor role is filled by K206. The Mg(2+) site is built by D234, E265, and N288. Residue 234–236 (DPN) coordinates substrate. Residues N288, 338–340 (HSN), H367, and R421 each bind substrate. H338 functions as the Proton acceptor in the catalytic mechanism.

Belongs to the mandelate racemase/muconate lactonizing enzyme family. GlucD subfamily. A divalent metal cation is required as a cofactor.

Functionally, does not seem to have an in-vivo activity on glucarate or idarate. Its real substrate is unknown. The chain is Glucarate dehydratase-related protein (gudX) from Escherichia coli (strain K12).